Reading from the N-terminus, the 67-residue chain is Small ribosomal subunit protein bS21 (67 aa).

This sequence belongs to the bacterial ribosomal protein bS21 family.

The chain is Small ribosomal subunit protein bS21 from Nitratidesulfovibrio vulgaris (strain DSM 19637 / Miyazaki F) (Desulfovibrio vulgaris).